Reading from the N-terminus, the 258-residue chain is UPF0246 protein ACIAD2218 (258 aa).

It belongs to the UPF0246 family.

In Acinetobacter baylyi (strain ATCC 33305 / BD413 / ADP1), this protein is UPF0246 protein ACIAD2218.